The following is a 476-amino-acid chain: WASH complex subunit 1 (476 aa).

The tract at residues M1–R54 is required for WASH complex assembly. 2 disordered regions span residues S273–D412 and G427–S476. The span at T284–D296 shows a compositional bias: polar residues. Over residues L302 to P333 the composition is skewed to pro residues. Residues Q354 to S476 are VCA. One can recognise a WH2 domain in the interval G366–V388. Over residues S387–Q403 the composition is skewed to basic and acidic residues. Positions G467–S476 are enriched in acidic residues.

This sequence belongs to the WASH1 family. As to quaternary structure, component of the WASH complex.

The protein localises to the early endosome membrane. It localises to the recycling endosome membrane. Functionally, acts as a nucleation-promoting factor at the surface of endosomes, where it recruits and activates the Arp2/3 complex to induce actin polymerization, playing a key role in the fission of tubules that serve as transport intermediates during endosome sorting. In Gallus gallus (Chicken), this protein is WASH complex subunit 1.